The following is a 422-amino-acid chain: Probable sucrose-phosphatase 2 (422 aa).

The protein belongs to the sucrose phosphatase family. In terms of assembly, homodimer. The cofactor is Mg(2+).

The catalysed reaction is sucrose 6(F)-phosphate + H2O = sucrose + phosphate. Its pathway is glycan biosynthesis; sucrose biosynthesis; sucrose from D-fructose 6-phosphate and UDP-alpha-D-glucose: step 2/2. Its function is as follows. Catalyzes the final step of sucrose synthesis. This is Probable sucrose-phosphatase 2 (SPP2) from Arabidopsis thaliana (Mouse-ear cress).